Reading from the N-terminus, the 2873-residue chain is WD repeat-containing protein 87 (2873 aa).

WD repeat units follow at residues 108–146 (PCRF…TGLQ), 199–239 (TSSG…PLHS), 242–283 (AHQS…RRLE), 368–407 (SILD…CPAK), 415–460 (NSQD…RLEK), 516–553 (LSSC…SSGS), and 565–604 (LHLC…IGIL). Disordered stretches follow at residues 1049 to 1124 (FSLD…ESGT), 1177 to 1199 (DKRD…GKEA), 1392 to 1413 (EKKT…ERKV), 1531 to 1607 (SKSK…QEER), and 2199 to 2338 (KRKE…EEVD). Basic residues-rich tracts occupy residues 1089–1101 (VKKH…RGLK) and 1187–1197 (KLKKKHKKKGK). The segment covering 1549-1574 (EVSREGEEKEQQVTEEQRHIQEEHKW) has biased composition (basic and acidic residues). The segment covering 1575 to 1586 (ARIHRKRARAEK) has biased composition (basic residues). Composition is skewed to basic and acidic residues over residues 1587–1607 (KRAQ…QEER) and 2204–2213 (KRGDKPKEKF). The segment covering 2244–2276 (SSEEEEEREEEEEREEEEEREEEEERKEEEEGE) has biased composition (acidic residues). Residues 2277 to 2287 (EKQVEKEEEEK) are compositionally biased toward basic and acidic residues. Positions 2304–2337 (EVFEEKEEIMSEEETESLSDEEEEEESCSLEEEV) are enriched in acidic residues.

The polypeptide is WD repeat-containing protein 87 (WDR87) (Homo sapiens (Human)).